Here is a 157-residue protein sequence, read N- to C-terminus: 3-dehydroquinate dehydratase (157 aa).

Tyr-24 functions as the Proton acceptor in the catalytic mechanism. Substrate is bound by residues Asn-75, His-81, and Asp-88. The Proton donor role is filled by His-101. Residues 102–103 (LS) and Arg-112 contribute to the substrate site.

It belongs to the type-II 3-dehydroquinase family. As to quaternary structure, homododecamer.

It carries out the reaction 3-dehydroquinate = 3-dehydroshikimate + H2O. The protein operates within metabolic intermediate biosynthesis; chorismate biosynthesis; chorismate from D-erythrose 4-phosphate and phosphoenolpyruvate: step 3/7. Catalyzes a trans-dehydration via an enolate intermediate. In Brucella melitensis biotype 1 (strain ATCC 23456 / CCUG 17765 / NCTC 10094 / 16M), this protein is 3-dehydroquinate dehydratase.